The primary structure comprises 244 residues: Probable septum site-determining protein MinC (244 aa).

It belongs to the MinC family. Interacts with MinD and FtsZ.

In terms of biological role, cell division inhibitor that blocks the formation of polar Z ring septums. Rapidly oscillates between the poles of the cell to destabilize FtsZ filaments that have formed before they mature into polar Z rings. Prevents FtsZ polymerization. This Dichelobacter nodosus (strain VCS1703A) protein is Probable septum site-determining protein MinC.